The primary structure comprises 1050 residues: Sucrose-phosphate synthase 4 (1050 aa).

Residues Q134 to T167 form a disordered region. S148 carries the post-translational modification Phosphoserine. Basic and acidic residues predominate over residues E149–E163. S180 is modified (phosphoserine).

Belongs to the glycosyltransferase 1 family. Homodimer or homotetramer.

It catalyses the reaction beta-D-fructose 6-phosphate + UDP-alpha-D-glucose = sucrose 6(F)-phosphate + UDP + H(+). It participates in glycan biosynthesis; sucrose biosynthesis; sucrose from D-fructose 6-phosphate and UDP-alpha-D-glucose: step 1/2. Activity is regulated by phosphorylation and moderated by concentration of metabolites and light. Plays a role in photosynthetic sucrose synthesis by catalyzing the rate-limiting step of sucrose biosynthesis from UDP-glucose and fructose- 6-phosphate. Involved in the regulation of carbon partitioning in the leaves of plants. May regulate the synthesis of sucrose and therefore play a major role as a limiting factor in the export of photoassimilates out of the leaf. Plays a role for sucrose availability that is essential for plant growth and fiber elongation. This is Sucrose-phosphate synthase 4 from Arabidopsis thaliana (Mouse-ear cress).